The following is a 585-amino-acid chain: Aspartate--tRNA ligase (585 aa).

Glu-173 contacts L-aspartate. Residues 197–200 (QTLK) form an aspartate region. Arg-219 is an L-aspartate binding site. ATP-binding positions include 219–221 (RDE) and Gln-228. His-446 is a binding site for L-aspartate. Glu-480 contacts ATP. Arg-487 is a binding site for L-aspartate. 532–535 (GLDR) contacts ATP.

It belongs to the class-II aminoacyl-tRNA synthetase family. Type 1 subfamily. In terms of assembly, homodimer.

The protein resides in the cytoplasm. It catalyses the reaction tRNA(Asp) + L-aspartate + ATP = L-aspartyl-tRNA(Asp) + AMP + diphosphate. Catalyzes the attachment of L-aspartate to tRNA(Asp) in a two-step reaction: L-aspartate is first activated by ATP to form Asp-AMP and then transferred to the acceptor end of tRNA(Asp). The polypeptide is Aspartate--tRNA ligase (Bacteroides fragilis (strain YCH46)).